The following is a 78-amino-acid chain: DNA-directed RNA polymerase subunit Rpo5 (78 aa).

This sequence belongs to the archaeal Rpo5/eukaryotic RPB5 RNA polymerase subunit family. In terms of assembly, part of the RNA polymerase complex.

Its subcellular location is the cytoplasm. It carries out the reaction RNA(n) + a ribonucleoside 5'-triphosphate = RNA(n+1) + diphosphate. In terms of biological role, DNA-dependent RNA polymerase (RNAP) catalyzes the transcription of DNA into RNA using the four ribonucleoside triphosphates as substrates. This chain is DNA-directed RNA polymerase subunit Rpo5, found in Methanosarcina acetivorans (strain ATCC 35395 / DSM 2834 / JCM 12185 / C2A).